A 227-amino-acid polypeptide reads, in one-letter code: Protein p26 (227 aa).

Self-associates.

Its subcellular location is the host cell junction. The protein localises to the host plasmodesma. The polypeptide is Protein p26 (Lettuce infectious yellows virus (isolate United States/92) (LIYV)).